A 114-amino-acid chain; its full sequence is UPF0342 protein SERP1381 (114 aa).

The protein belongs to the UPF0342 family.

The protein is UPF0342 protein SERP1381 of Staphylococcus epidermidis (strain ATCC 35984 / DSM 28319 / BCRC 17069 / CCUG 31568 / BM 3577 / RP62A).